The chain runs to 218 residues: Small ribosomal subunit protein uS3c (218 aa).

The 72-residue stretch at 47–118 (VQKNMKTSSG…KLNIAITRIE (72 aa)) folds into the KH type-2 domain.

Belongs to the universal ribosomal protein uS3 family. Part of the 30S ribosomal subunit.

The protein localises to the plastid. It is found in the chloroplast. In Lactuca sativa (Garden lettuce), this protein is Small ribosomal subunit protein uS3c (rps3).